A 455-amino-acid polypeptide reads, in one-letter code: Bifunctional protein GlmU (455 aa).

The pyrophosphorylase stretch occupies residues 1 to 227 (MGLSVIILAA…CEEVQGVNDR (227 aa)). Residues 8–11 (LAAG), lysine 22, glutamine 73, 78–79 (GT), 100–102 (YGD), glycine 137, glutamate 152, asparagine 167, and asparagine 225 each bind UDP-N-acetyl-alpha-D-glucosamine. A Mg(2+)-binding site is contributed by aspartate 102. Asparagine 225 serves as a coordination point for Mg(2+). Positions 228-248 (WELTKLERYYQRLMAKKLSLA) are linker. The tract at residues 249–455 (GVTIIDPERF…KGWHRPTKKE (207 aa)) is N-acetyltransferase. Residues arginine 332 and lysine 350 each contribute to the UDP-N-acetyl-alpha-D-glucosamine site. Residue histidine 362 is the Proton acceptor of the active site. UDP-N-acetyl-alpha-D-glucosamine-binding residues include tyrosine 365 and asparagine 376. Residues alanine 379, 385–386 (NY), serine 404, alanine 422, and arginine 439 contribute to the acetyl-CoA site.

This sequence in the N-terminal section; belongs to the N-acetylglucosamine-1-phosphate uridyltransferase family. It in the C-terminal section; belongs to the transferase hexapeptide repeat family. As to quaternary structure, homotrimer. Mg(2+) is required as a cofactor.

The protein localises to the cytoplasm. The catalysed reaction is alpha-D-glucosamine 1-phosphate + acetyl-CoA = N-acetyl-alpha-D-glucosamine 1-phosphate + CoA + H(+). It catalyses the reaction N-acetyl-alpha-D-glucosamine 1-phosphate + UTP + H(+) = UDP-N-acetyl-alpha-D-glucosamine + diphosphate. Its pathway is nucleotide-sugar biosynthesis; UDP-N-acetyl-alpha-D-glucosamine biosynthesis; N-acetyl-alpha-D-glucosamine 1-phosphate from alpha-D-glucosamine 6-phosphate (route II): step 2/2. It functions in the pathway nucleotide-sugar biosynthesis; UDP-N-acetyl-alpha-D-glucosamine biosynthesis; UDP-N-acetyl-alpha-D-glucosamine from N-acetyl-alpha-D-glucosamine 1-phosphate: step 1/1. The protein operates within bacterial outer membrane biogenesis; LPS lipid A biosynthesis. Functionally, catalyzes the last two sequential reactions in the de novo biosynthetic pathway for UDP-N-acetylglucosamine (UDP-GlcNAc). The C-terminal domain catalyzes the transfer of acetyl group from acetyl coenzyme A to glucosamine-1-phosphate (GlcN-1-P) to produce N-acetylglucosamine-1-phosphate (GlcNAc-1-P), which is converted into UDP-GlcNAc by the transfer of uridine 5-monophosphate (from uridine 5-triphosphate), a reaction catalyzed by the N-terminal domain. This chain is Bifunctional protein GlmU, found in Coxiella burnetii (strain RSA 493 / Nine Mile phase I).